The following is an 804-amino-acid chain: Leucine--tRNA ligase (804 aa).

The 'HIGH' region motif lies at 39–50 (PFPSGKGLHVGH). Positions 573–577 (KMSKS) match the 'KMSKS' region motif. Lys576 serves as a coordination point for ATP.

This sequence belongs to the class-I aminoacyl-tRNA synthetase family.

Its subcellular location is the cytoplasm. It catalyses the reaction tRNA(Leu) + L-leucine + ATP = L-leucyl-tRNA(Leu) + AMP + diphosphate. The sequence is that of Leucine--tRNA ligase from Lactobacillus acidophilus (strain ATCC 700396 / NCK56 / N2 / NCFM).